Reading from the N-terminus, the 428-residue chain is Type II methyltransferase M.BanI (428 aa).

The SAM-dependent MTase C5-type domain maps to Ile-3–Glu-417. The active site involves Cys-76.

The protein belongs to the class I-like SAM-binding methyltransferase superfamily. C5-methyltransferase family. Monomer.

It carries out the reaction a 2'-deoxycytidine in DNA + S-adenosyl-L-methionine = a 5-methyl-2'-deoxycytidine in DNA + S-adenosyl-L-homocysteine + H(+). A methylase, recognizes the double-stranded sequence 5'-GGYRCC-3', methylates C-4 on both strands, and protects the DNA from cleavage by the BanI endonuclease. This chain is Type II methyltransferase M.BanI (banIM), found in Aneurinibacillus aneurinilyticus (Bacillus aneurinolyticus).